A 258-amino-acid polypeptide reads, in one-letter code: Homeobox protein VENTX (258 aa).

Polar residues predominate over residues 1 to 32 (MRLSSSPPRGPQQLSSFGSVDWLSQSSCSGPT). 2 disordered regions span residues 1–93 (MRLS…RAPR) and 227–248 (SHPPTPGRPSLGPALSTGPRGL). The homeobox DNA-binding region spans 91 to 150 (APRVRTAFTMEQVRTLEGVFQHHQYLSPLERKRLAREMQLSEVQIKTWFQNRRMKHKRQM).

As to expression, expressed in bone marrow of patients recovering from chemotherapy. Also expressed in an erythroleukemia cell line.

Its subcellular location is the nucleus. Its function is as follows. May be involved in ventralization. This is Homeobox protein VENTX (VENTX) from Homo sapiens (Human).